The following is a 137-amino-acid chain: Putative pumilio homolog 25 (137 aa).

Pumilio repeat units lie at residues glutamate 70–serine 105 and serine 108–alanine 137.

It localises to the cytoplasm. Sequence-specific RNA-binding protein that regulates translation and mRNA stability by binding the 3'-UTR of target mRNAs. The protein is Putative pumilio homolog 25 (APUM25) of Arabidopsis thaliana (Mouse-ear cress).